The following is a 294-amino-acid chain: ATP phosphoribosyltransferase (294 aa).

It belongs to the ATP phosphoribosyltransferase family. Long subfamily. Requires Mg(2+) as cofactor.

The protein resides in the cytoplasm. It carries out the reaction 1-(5-phospho-beta-D-ribosyl)-ATP + diphosphate = 5-phospho-alpha-D-ribose 1-diphosphate + ATP. It participates in amino-acid biosynthesis; L-histidine biosynthesis; L-histidine from 5-phospho-alpha-D-ribose 1-diphosphate: step 1/9. Its activity is regulated as follows. Feedback inhibited by histidine. Catalyzes the condensation of ATP and 5-phosphoribose 1-diphosphate to form N'-(5'-phosphoribosyl)-ATP (PR-ATP). Has a crucial role in the pathway because the rate of histidine biosynthesis seems to be controlled primarily by regulation of HisG enzymatic activity. This chain is ATP phosphoribosyltransferase, found in Chlorobium phaeovibrioides (strain DSM 265 / 1930) (Prosthecochloris vibrioformis (strain DSM 265)).